A 583-amino-acid chain; its full sequence is Radixin (583 aa).

The region spanning 5–295 (INVRVTTMDA…GNHELYMRRR (291 aa)) is the FERM domain. 60–63 (KLNK) is an a 1,2-diacyl-sn-glycero-3-phospho-(1D-myo-inositol) binding site. Residue lysine 83 is modified to N6-succinyllysine. An a 1,2-diacyl-sn-glycero-3-phospho-(1D-myo-inositol)-binding site is contributed by lysine 278. Disordered stretches follow at residues 309 to 336 (AREE…AEKE), 374 to 407 (ELDQ…AKQA), and 460 to 526 (KEEL…RVKK). Residues 374–400 (ELDQERKRAKEEAERLEKERQAAEEAK) show a composition bias toward basic and acidic residues. Residues 469–480 (APPPPPPPPVIP) show a composition bias toward pro residues. Basic and acidic residues-rich tracts occupy residues 483 to 492 (ENEHDEHDEN) and 506 to 525 (MNHR…ERVK). Threonine 564 is subject to Phosphothreonine; by ROCK2.

As to quaternary structure, interacts with CPNE1 (via VWFA domain) and CPNE4 (via VWFA domain). Binds NHERF1. Interacts with NHERF1, NHERF2, LAYN, MME/NEP and ICAM2. Interacts (via FERM domain) with SPN/CD43 cytoplasmic tail. Interacts with CD44. Interacts with CLIC5; may work together in a complex which also includes EZR and MYO6 to stabilize linkages between the plasma membrane and subjacent actin cytoskeleton at the base of stereocilia. Phosphorylated by tyrosine-protein kinases. Phosphorylation by ROCK2 suppresses the head-to-tail association of the N-terminal and C-terminal halves resulting in an opened conformation which is capable of actin and membrane-binding.

The protein localises to the cell membrane. It is found in the cytoplasm. It localises to the cytoskeleton. The protein resides in the cleavage furrow. Its subcellular location is the cell projection. The protein localises to the microvillus. It is found in the stereocilium. Its activity is regulated as follows. A head-to-tail association, of the N-terminal and C-terminal halves results in a closed conformation (inactive form) which is incapable of actin or membrane-binding. Functionally, probably plays a crucial role in the binding of the barbed end of actin filaments to the plasma membrane. The polypeptide is Radixin (RDX) (Bos taurus (Bovine)).